The following is a 1787-amino-acid chain: Chromodomain-helicase-DNA-binding protein 3 homolog (1787 aa).

Disordered stretches follow at residues 1–80 (MSDD…PDPY) and 170–258 (PVTP…KEQG). The segment covering 10–43 (DGDETMEEDSMLAEGHEDGEEDVGEDEEEVETEE) has biased composition (acidic residues). The segment covering 56–71 (PPPKKKKGGKKSSKKK) has biased composition (basic residues). Residues 192–243 (DGSDGEGGGHDSDQEFEALIKQHEKQQDEAEKGKEEARINRAAAKVDKRKAA) are compositionally biased toward basic and acidic residues. 2 consecutive PHD-type zinc fingers follow at residues 265–312 (QENC…CEEH) and 328–375 (MDYC…CIIP). 2 consecutive Chromo domains span residues 373–476 (IIPE…STLS) and 501–583 (MQIH…GPKE). The Helicase ATP-binding domain occupies 628–812 (RHCWSNGTDA…FHLLNFLAPD (185 aa)). Residue 641–648 (DEMGLGKT) participates in ATP binding. A DEAH box motif is present at residues 763-766 (DEAH). In terms of domain architecture, Helicase C-terminal spans 944–1107 (LLQKMLRKLK…GKSMSKTELD (164 aa)). Disordered regions lie at residues 1120 to 1141 (EEEA…PNEQ), 1186 to 1212 (TKEA…QDPN), 1248 to 1295 (ENMG…EERS), and 1754 to 1787 (RASS…YPRY). The span at 1190–1199 (DDADDDEDET) shows a compositional bias: acidic residues. Polar residues predominate over residues 1248-1261 (ENMGQDWSAQNNQQ). Basic and acidic residues predominate over residues 1761–1773 (TKDEPMDTSDKDI).

The protein belongs to the SNF2/RAD54 helicase family. Expressed in the head and vulva.

Its subcellular location is the nucleus. The catalysed reaction is ATP + H2O = ADP + phosphate + H(+). ATP-dependent chromatin-remodeling factor that has a role in notch signaling-dependent vulval cell fate determination. May also have a role in pharyngeal precursor cell specification. The sequence is that of Chromodomain-helicase-DNA-binding protein 3 homolog (chd-3) from Caenorhabditis elegans.